The sequence spans 161 residues: Phosphohistidine phosphatase SixA (161 aa).

It belongs to the SixA phosphatase family.

In terms of biological role, exhibits phosphohistidine phosphatase activity towards the HPt domain of the ArcB sensor involved in the multistep His-Asp phosphorelay. The protein is Phosphohistidine phosphatase SixA (sixA) of Escherichia coli (strain K12).